The sequence spans 71 residues: uncharacterized protein (71 aa).

Over 1–16 (MLLLYTVMILTCIIYK) the chain is Cytoplasmic. A helical membrane pass occupies residues 17–38 (LVPDNKYWPIHMFFFIMIYIVY). Residues 39–69 (MYEKLDIHEKSQFWNYTMARLSGHPVPTIIC) lie on the Extracellular side of the membrane. Asparagine 53 carries N-linked (GlcNAc...) asparagine; by host glycosylation.

This sequence belongs to the asfivirus X69R family.

Its subcellular location is the host membrane. This is an uncharacterized protein from African swine fever virus (isolate Pig/Kenya/KEN-50/1950) (ASFV).